We begin with the raw amino-acid sequence, 376 residues long: DNA replication and repair protein RecF (376 aa).

Residue 30–37 participates in ATP binding; the sequence is GHNGVGKT.

The protein belongs to the RecF family.

The protein localises to the cytoplasm. In terms of biological role, the RecF protein is involved in DNA metabolism; it is required for DNA replication and normal SOS inducibility. RecF binds preferentially to single-stranded, linear DNA. It also seems to bind ATP. This Salinispora arenicola (strain CNS-205) protein is DNA replication and repair protein RecF.